Reading from the N-terminus, the 210-residue chain is Glutathione S-transferase P (210 aa).

Residues proline 2 to glycine 81 form the GST N-terminal domain. Tyrosine 4 carries the phosphotyrosine; by EGFR modification. Residues tyrosine 8, arginine 14, tryptophan 39, lysine 45, and glutamine 52–leucine 53 contribute to the glutathione site. Threonine 62 is modified (phosphothreonine). Position 65 to 66 (glutamine 65 to serine 66) interacts with glutathione. One can recognise a GST C-terminal domain in the interval aspartate 83–isoleucine 204. Residues lysine 103 and lysine 116 each carry the N6-succinyllysine modification. N6-acetyllysine is present on lysine 128.

It belongs to the GST superfamily. Pi family. In terms of assembly, homodimer. Interacts with CDK5. Present in kidney, lung, testis and placenta, very low levels in liver.

The protein localises to the cytoplasm. It is found in the mitochondrion. The protein resides in the nucleus. It catalyses the reaction RX + glutathione = an S-substituted glutathione + a halide anion + H(+). The catalysed reaction is prostaglandin J2 + glutathione = prostaglandin J2-S-(R)-glutathione. It carries out the reaction prostaglandin J2 + glutathione = prostaglandin J2-S-(S)-glutathione. The enzyme catalyses prostaglandin A2 + glutathione = prostaglandin A2-S-(S)-glutathione. It catalyses the reaction 11(S)-hydroxy-14(S),15(S)-epoxy-(5Z,8Z,12E)-eicosatrienoate + glutathione = (11S,15S)-dihydroxy-14(R)-S-glutathionyl-(5Z,8Z,12E)-eicosatrienoate. Conjugation of reduced glutathione to a wide number of exogenous and endogenous hydrophobic electrophiles. Involved in the formation of glutathione conjugates of both prostaglandin A2 (PGA2) and prostaglandin J2 (PGJ2). Participates in the formation of novel hepoxilin regioisomers. Negatively regulates CDK5 activity via p25/p35 translocation to prevent neurodegeneration. This Rattus norvegicus (Rat) protein is Glutathione S-transferase P.